A 1143-amino-acid chain; its full sequence is DNA-directed RNA polymerase subunit beta (1143 aa).

The protein belongs to the RNA polymerase beta chain family. In plastids the minimal PEP RNA polymerase catalytic core is composed of four subunits: alpha, beta, beta', and beta''. When a (nuclear-encoded) sigma factor is associated with the core the holoenzyme is formed, which can initiate transcription.

Its subcellular location is the plastid. It localises to the chloroplast. The enzyme catalyses RNA(n) + a ribonucleoside 5'-triphosphate = RNA(n+1) + diphosphate. DNA-dependent RNA polymerase catalyzes the transcription of DNA into RNA using the four ribonucleoside triphosphates as substrates. The polypeptide is DNA-directed RNA polymerase subunit beta (Pyropia yezoensis (Susabi-nori)).